Consider the following 147-residue polypeptide: Sec-independent protein translocase protein TatB (147 aa).

The helical transmembrane segment at M1–G21 threads the bilayer. Positions E67–V88 are enriched in basic and acidic residues. The tract at residues E67–E147 is disordered. Low complexity predominate over residues A103–A117.

It belongs to the TatB family. As to quaternary structure, the Tat system comprises two distinct complexes: a TatABC complex, containing multiple copies of TatA, TatB and TatC subunits, and a separate TatA complex, containing only TatA subunits. Substrates initially bind to the TatABC complex, which probably triggers association of the separate TatA complex to form the active translocon.

The protein localises to the cell inner membrane. Functionally, part of the twin-arginine translocation (Tat) system that transports large folded proteins containing a characteristic twin-arginine motif in their signal peptide across membranes. Together with TatC, TatB is part of a receptor directly interacting with Tat signal peptides. TatB may form an oligomeric binding site that transiently accommodates folded Tat precursor proteins before their translocation. In Nitrosospira multiformis (strain ATCC 25196 / NCIMB 11849 / C 71), this protein is Sec-independent protein translocase protein TatB.